Here is a 498-residue protein sequence, read N- to C-terminus: MYNLNALIDRLIEISINNNLIEDMDTVYTRNRLLSLFNENSYTPCEEKLTLSFHETLNELINIAIEKKIIENALYSKDIFSSDIMNIFLPTPSLINKEFYKRYAISPKESTDYFYSLSKSSNYIRTDRIAKNINFKAPSKYGTMDITINLSKPEKDPKEIALARNSVKSNYPKCLLCIENEGYEGTVTHPDRANHRMIRLDLNDRTWMLQYSPYLYYNEHCIILSEDHVPMKIDISTFKNLLSFVDKFPHYFTGSNADLPIVGGSILSHEHYQGGNHRFPMNDAKKLFDFSIEGFEDVECEAIKWPISTIRLRGENIDSLVLASDLILKKWRDYSDETLDILAYSNSEMHNTITPMVRKEDGKFVVDLSLRNNRTSKEHPLGIFHPHEEVHHIKKENIGLIEVMGLAVLPGRLLKELEKIKEYLRDEISLDNIEEYHRPWALELKKKFDYLKSSTDLNDFVNKELSNKFVSVLEHCGVFKLNEEGLEGFKRFTNSLNS.

It belongs to the galactose-1-phosphate uridylyltransferase type 2 family.

The protein resides in the cytoplasm. The catalysed reaction is alpha-D-galactose 1-phosphate + UDP-alpha-D-glucose = alpha-D-glucose 1-phosphate + UDP-alpha-D-galactose. It functions in the pathway carbohydrate metabolism; galactose metabolism. The polypeptide is Galactose-1-phosphate uridylyltransferase (Clostridium perfringens (strain 13 / Type A)).